Reading from the N-terminus, the 472-residue chain is Serralysin A (472 aa).

Residues Met1–Ser17 constitute a propeptide that is removed on maturation. A Zn(2+)-binding site is contributed by His186. Residue Glu187 is part of the active site. Zn(2+) contacts are provided by His190 and Tyr221. Residues Arg258, Gly260, Thr262, Asp290, Gly292, Gly293, Thr332, Glu334, Gly339, Gly341, Asp343, Asn348, Ala350, Asn352, Gly356, Gly357, Ala358, Gly359, Asp361, Gly365, Gly366, Gly367, Gly368, Asp370, Gly374, Gly375, Gly377, Asp379, Asp388, Asp395, and Asp405 each contribute to the Ca(2+) site. Hemolysin-type calcium-binding repeat units lie at residues Ile337 to Leu354 and Arg355 to Leu372.

Belongs to the peptidase M10B family. Ca(2+) serves as cofactor. Requires Zn(2+) as cofactor.

The protein localises to the secreted. It carries out the reaction Preferential cleavage of bonds with hydrophobic residues in P1'.. This chain is Serralysin A (prtA), found in Dickeya chrysanthemi (Pectobacterium chrysanthemi).